A 398-amino-acid chain; its full sequence is Phosphoglycerate kinase (398 aa).

Residues 21-23 (DFN), arginine 36, 59-62 (HLGR), arginine 119, and arginine 157 contribute to the substrate site. Residues lysine 208, glycine 296, glutamate 327, and 354–357 (GGDS) each bind ATP.

The protein belongs to the phosphoglycerate kinase family. As to quaternary structure, monomer.

It localises to the cytoplasm. The catalysed reaction is (2R)-3-phosphoglycerate + ATP = (2R)-3-phospho-glyceroyl phosphate + ADP. It functions in the pathway carbohydrate degradation; glycolysis; pyruvate from D-glyceraldehyde 3-phosphate: step 2/5. The protein is Phosphoglycerate kinase of Streptococcus agalactiae serotype III (strain NEM316).